Consider the following 121-residue polypeptide: Protein TusC (121 aa).

Belongs to the DsrF/TusC family. As to quaternary structure, heterohexamer, formed by a dimer of trimers. The hexameric TusBCD complex contains 2 copies each of TusB, TusC and TusD. The TusBCD complex interacts with TusE.

Its subcellular location is the cytoplasm. In terms of biological role, part of a sulfur-relay system required for 2-thiolation of 5-methylaminomethyl-2-thiouridine (mnm(5)s(2)U) at tRNA wobble positions. This chain is Protein TusC, found in Yersinia enterocolitica serotype O:8 / biotype 1B (strain NCTC 13174 / 8081).